The following is a 396-amino-acid chain: Probable glucan endo-1,6-beta-glucosidase B (396 aa).

An N-terminal signal peptide occupies residues 1 to 17 (MIRRLAAFSALSGLATA). Asn-30 is a glycosylation site (N-linked (GlcNAc...) asparagine). Catalysis depends on Glu-219, which acts as the Proton donor. The N-linked (GlcNAc...) asparagine glycan is linked to Asn-272. Glu-320 (nucleophile) is an active-site residue.

Belongs to the glycosyl hydrolase 5 (cellulase A) family.

The protein localises to the secreted. It carries out the reaction Random hydrolysis of (1-&gt;6)-linkages in (1-&gt;6)-beta-D-glucans.. Beta-glucanases participate in the metabolism of beta-glucan, the main structural component of the cell wall. Acts on lutean, pustulan and 1,6-oligo-beta-D-glucosides. The sequence is that of Probable glucan endo-1,6-beta-glucosidase B (exgB) from Aspergillus fumigatus (strain CBS 144.89 / FGSC A1163 / CEA10) (Neosartorya fumigata).